Here is a 132-residue protein sequence, read N- to C-terminus: Translation initiation factor 5A (132 aa).

Position 36 is a hypusine (Lys36).

Belongs to the eIF-5A family.

Its subcellular location is the cytoplasm. In terms of biological role, functions by promoting the formation of the first peptide bond. The chain is Translation initiation factor 5A (eIF5A) from Desulfurococcus amylolyticus (strain DSM 18924 / JCM 16383 / VKM B-2413 / 1221n) (Desulfurococcus kamchatkensis).